Here is a 261-residue protein sequence, read N- to C-terminus: uncharacterized protein (261 aa).

Residues 1 to 22 (MRDSKRVVLYISIIVLSIFIIG) form the signal peptide. Residue Cys-23 is the site of N-palmitoyl cysteine attachment. Cys-23 carries the S-diacylglycerol cysteine lipid modification.

Belongs to the staphylococcal tandem lipoprotein family.

Its subcellular location is the cell membrane. This is an uncharacterized protein from Staphylococcus aureus (strain Mu50 / ATCC 700699).